Reading from the N-terminus, the 221-residue chain is uncharacterized protein (221 aa).

This is an uncharacterized protein from Shigella flexneri.